A 505-amino-acid chain; its full sequence is Lysine--tRNA ligase (505 aa).

Mg(2+) contacts are provided by E415 and E422.

The protein belongs to the class-II aminoacyl-tRNA synthetase family. Homodimer. Mg(2+) is required as a cofactor.

It is found in the cytoplasm. It catalyses the reaction tRNA(Lys) + L-lysine + ATP = L-lysyl-tRNA(Lys) + AMP + diphosphate. The chain is Lysine--tRNA ligase from Salmonella paratyphi C (strain RKS4594).